The primary structure comprises 134 residues: Putative thioredoxin 2 (134 aa).

The Thioredoxin domain maps to 3 to 106; that stretch reads STVELTKENF…LTDVIGQARK (104 aa). Cys31 and Cys34 form a disulfide bridge. The disordered stretch occupies residues 115–134; sequence AVAEQQAQAGQNGQEGQEGQ. Low complexity predominate over residues 117-134; it reads AEQQAQAGQNGQEGQEGQ.

This sequence belongs to the thioredoxin family.

It localises to the cytoplasm. Component of the thioredoxin-thioredoxin reductase system. Participates in various redox reactions through the reversible oxidation of its active center dithiol to a disulfide and catalyzes dithiol-disulfide exchange reactions. This is Putative thioredoxin 2 (trxC) from Streptomyces coelicolor (strain ATCC BAA-471 / A3(2) / M145).